A 154-amino-acid chain; its full sequence is Transcription antitermination protein NusB (154 aa).

Belongs to the NusB family.

Functionally, involved in transcription antitermination. Required for transcription of ribosomal RNA (rRNA) genes. Binds specifically to the boxA antiterminator sequence of the ribosomal RNA (rrn) operons. The chain is Transcription antitermination protein NusB from Enterococcus faecalis (strain ATCC 700802 / V583).